A 101-amino-acid polypeptide reads, in one-letter code: MVDSFVQSKLRDNKVTLFVKGSCPYCKNAIVLLKEFNFLPGCLEVVDITGMDDIQDYFQKTTGQRTVPRVFIGTKCIGGFSDLQKMEQQLPMMLRQIGALV.

The region spanning 3–101 is the Glutaredoxin domain; that stretch reads DSFVQSKLRD…MMLRQIGALV (99 aa). Cys23 and Cys26 are disulfide-bonded.

It belongs to the glutaredoxin family.

Its subcellular location is the cytoplasm. Its function is as follows. Has a glutathione-disulfide oxidoreductase activity in the presence of NADPH and glutathione reductase. Reduces low molecular weight disulfides and proteins. In Gallus gallus (Chicken), this protein is Glutaredoxin-1 (GLRX).